The primary structure comprises 401 residues: Phosphoglycerate kinase (401 aa).

Substrate-binding positions include 23–25 (DFN), Arg39, 62–65 (HLGR), Arg121, and Arg154. Residues Lys207, Gly298, Glu329, and 355–358 (GGDT) each bind ATP.

It belongs to the phosphoglycerate kinase family. In terms of assembly, monomer.

The protein localises to the cytoplasm. It carries out the reaction (2R)-3-phosphoglycerate + ATP = (2R)-3-phospho-glyceroyl phosphate + ADP. Its pathway is carbohydrate degradation; glycolysis; pyruvate from D-glyceraldehyde 3-phosphate: step 2/5. This Campylobacter fetus subsp. fetus (strain 82-40) protein is Phosphoglycerate kinase.